A 184-amino-acid chain; its full sequence is MSDIIQDTKARMSKSIDNLSRELANISAGRANSNLLSGVTVDYYGAPTPVQQLASINVPEARLLVISPYDKSSVADIEKAIYAANLGVNPTSDGEVIRITVPALTEERRKELVKNVKKIGEDAKVSIRNIRRDINDQLKKDEKNGDITEDDLRSQTEDVQKATDNSIKEIDQLVEDKEKDIMSV.

Residues 141-164 (DEKNGDITEDDLRSQTEDVQKATD) are disordered.

The protein belongs to the RRF family.

It is found in the cytoplasm. In terms of biological role, responsible for the release of ribosomes from messenger RNA at the termination of protein biosynthesis. May increase the efficiency of translation by recycling ribosomes from one round of translation to another. The chain is Ribosome-recycling factor from Staphylococcus haemolyticus (strain JCSC1435).